We begin with the raw amino-acid sequence, 601 residues long: Glutathione-regulated potassium-efflux system protein KefB (601 aa).

13 consecutive transmembrane segments (helical) span residues 4-24 (SDLLTAGVMFLFAAVAAVPLA), 29-49 (IGAVLGYLLAGIAIGPWGLGF), 55-75 (EILHFSELGVVFLMFIIGLEL), 87-107 (IFGVGAAQVMLSAVVLAGLLM), 115-135 (AAVIGGIGLAMSSTAMALQLM), 152-172 (VLLFQDLAVIPALALVPLLAG), 177-197 (HFDWIKVGMKVLAFAGMLIGG), 207-227 (FIADSGVREVFTAATLLLVLG), 230-250 (LFMDALGLSMALGTFIAGVLL), 262-282 (AIDPFKGLLLGLFFISVGMSL), 284-304 (LGVLYTHLLWVAVSVIVLVAV), 324-344 (MQFAGVLSQGGEFAFVLFSTA), and 356-376 (SLLLVTVTLSMMTTPLLMKLV). One can recognise an RCK N-terminal domain in the interval 400–519 (KPQVIVVGFG…AGVTQFSRET (120 aa)).

The protein belongs to the monovalent cation:proton antiporter 2 (CPA2) transporter (TC 2.A.37) family. KefB subfamily. As to quaternary structure, interacts with the regulatory subunit KefG.

The protein localises to the cell inner membrane. Functionally, pore-forming subunit of a potassium efflux system that confers protection against electrophiles. Catalyzes K(+)/H(+) antiport. The polypeptide is Glutathione-regulated potassium-efflux system protein KefB (Citrobacter koseri (strain ATCC BAA-895 / CDC 4225-83 / SGSC4696)).